Reading from the N-terminus, the 449-residue chain is Putative transporter C83.11 (449 aa).

The next 9 membrane-spanning stretches (helical) occupy residues 7–27, 47–67, 84–104, 109–129, 136–156, 164–184, 205–225, 255–275, and 278–298; these read LSHI…LWYI, VTLT…CLLF, VLYT…FGSL, IPVS…VLAY, VYSA…TLAC, IVGL…NIFG, LNLL…VWLY, ILAF…ASLI, and IFVI…TQGS. Ser-348 and Ser-352 each carry phosphoserine. Tyr-355 is subject to Phosphotyrosine. The span at 382-415 shows a compositional bias: polar residues; it reads NSVYSNEGVTSSVSGNATPASVRQSTQNDFSNSN. The segment at 382 to 416 is disordered; the sequence is NSVYSNEGVTSSVSGNATPASVRQSTQNDFSNSNI.

Belongs to the TPT transporter family.

It localises to the membrane. The protein is Putative transporter C83.11 of Schizosaccharomyces pombe (strain 972 / ATCC 24843) (Fission yeast).